Here is a 379-residue protein sequence, read N- to C-terminus: MQDEMLGIILAGGQGTRLGKLTKDTAKPAVPFGGRYRIIDFTLSNCANSGVNTVGVITQYQPLELNAHIGSGASWGFDSLNGGVTVLQPYSSSEGEKFFQGTAHAIYQNIEYIDQQDPKYLLVLSGDHIYKMDYDAMLKYHQEKKASLTVGVIHVTNEEAKRFGMMNTDATDRIIEFEEKPEHPKSDKASMGIYIFNWPTLRDYLVKSYATDKSLEDFGKNVIPSYLANNESVYAYAFKGYWRDVGTIKSLWQANMEFLSPHNRLNIGDRYWRIYSKAEVLPPMFLTETSQVNNAMVVDSCYVAGEIDHSILSQRVSVGMGSRVVDSMIMPGATIGKNVVIDHALIGEDAVIGDDAQIIGTTDKIAVVGYHETMGVEQP.

Alpha-D-glucose 1-phosphate contacts are provided by residues Gly164, 179 to 180 (EK), and Ser190.

Belongs to the bacterial/plant glucose-1-phosphate adenylyltransferase family. As to quaternary structure, homotetramer.

The catalysed reaction is alpha-D-glucose 1-phosphate + ATP + H(+) = ADP-alpha-D-glucose + diphosphate. Its pathway is glycan biosynthesis; glycogen biosynthesis. Its function is as follows. Involved in the biosynthesis of ADP-glucose, a building block required for the elongation reactions to produce glycogen. Catalyzes the reaction between ATP and alpha-D-glucose 1-phosphate (G1P) to produce pyrophosphate and ADP-Glc. In Lactiplantibacillus plantarum (strain ATCC BAA-793 / NCIMB 8826 / WCFS1) (Lactobacillus plantarum), this protein is Glucose-1-phosphate adenylyltransferase.